The chain runs to 101 residues: Small ribosomal subunit protein uS14 (101 aa).

The protein belongs to the universal ribosomal protein uS14 family. In terms of assembly, part of the 30S ribosomal subunit. Contacts proteins S3 and S10.

In terms of biological role, binds 16S rRNA, required for the assembly of 30S particles and may also be responsible for determining the conformation of the 16S rRNA at the A site. The chain is Small ribosomal subunit protein uS14 from Anaplasma phagocytophilum (strain HZ).